The following is a 430-amino-acid chain: Cell division protein FtsZ (430 aa).

Residues 76–80, 163–165, Glu194, Arg198, and Asp242 contribute to the GTP site; these read GGGCN and GTG. The segment at 374–418 is disordered; it reads KEKPQAKTSSKPVLSGPPAGVETVPSTTTPEDPLGEIPMAPELDI.

It belongs to the FtsZ family. Homodimer. Polymerizes to form a dynamic ring structure in a strictly GTP-dependent manner. Interacts directly with several other division proteins.

The protein localises to the cytoplasm. In terms of biological role, essential cell division protein that forms a contractile ring structure (Z ring) at the future cell division site. The regulation of the ring assembly controls the timing and the location of cell division. One of the functions of the FtsZ ring is to recruit other cell division proteins to the septum to produce a new cell wall between the dividing cells. Binds GTP and shows GTPase activity. This is Cell division protein FtsZ from Synechocystis sp. (strain ATCC 27184 / PCC 6803 / Kazusa).